A 245-amino-acid chain; its full sequence is OCIA domain-containing protein 1 (245 aa).

An OCIA domain is found at 1–112; sequence MNGRADFREP…KKLENSPLGE (112 aa). Residues Ser-108, Ser-116, Ser-123, and Ser-191 each carry the phosphoserine modification. 2 disordered regions span residues 111 to 141 and 169 to 245; these read GEAL…VSGQ and NESA…TWDE. 2 stretches are compositionally biased toward basic and acidic residues: residues 190–210 and 224–238; these read ESPK…RESY and PMHE…KVNK.

The protein belongs to the OCIAD1 family. Interacts with OCIAD2. Interacts with STAT3. In terms of tissue distribution, isoform 1 is highly expressed in many tissues, including testis, brain, placenta, ovary, prostate and mammary gland. Isoform 2 expression is restricted to the central nervous system including brain, cerebellum and spinal cord.

Its subcellular location is the endosome. Maintains stem cell potency. Increases STAT3 phosphorylation and controls ERK phosphorylation. May act as a scaffold, increasing STAT3 recruitment onto endosomes. Involved in integrin-mediated cancer cell adhesion and colony formation in ovarian cancer. The protein is OCIA domain-containing protein 1 of Homo sapiens (Human).